Here is a 404-residue protein sequence, read N- to C-terminus: Cysteine desulfurase IscS (404 aa).

Residues 75-76 (AT), asparagine 155, glutamine 183, and 203-205 (SAH) each bind pyridoxal 5'-phosphate. Lysine 206 bears the N6-(pyridoxal phosphate)lysine mark. Pyridoxal 5'-phosphate is bound at residue threonine 243. The active-site Cysteine persulfide intermediate is cysteine 328. [2Fe-2S] cluster is bound at residue cysteine 328.

This sequence belongs to the class-V pyridoxal-phosphate-dependent aminotransferase family. NifS/IscS subfamily. Homodimer. Forms a heterotetramer with IscU, interacts with other sulfur acceptors. Requires pyridoxal 5'-phosphate as cofactor.

It localises to the cytoplasm. It catalyses the reaction (sulfur carrier)-H + L-cysteine = (sulfur carrier)-SH + L-alanine. The protein operates within cofactor biosynthesis; iron-sulfur cluster biosynthesis. In terms of biological role, master enzyme that delivers sulfur to a number of partners involved in Fe-S cluster assembly, tRNA modification or cofactor biosynthesis. Catalyzes the removal of elemental sulfur atoms from cysteine to produce alanine. Functions as a sulfur delivery protein for Fe-S cluster synthesis onto IscU, an Fe-S scaffold assembly protein, as well as other S acceptor proteins. This chain is Cysteine desulfurase IscS, found in Buchnera aphidicola subsp. Baizongia pistaciae (strain Bp).